Here is a 205-residue protein sequence, read N- to C-terminus: High frequency lysogenization protein HflD homolog (205 aa).

It belongs to the HflD family.

It is found in the cytoplasm. Its subcellular location is the cell inner membrane. In Vibrio vulnificus (strain CMCP6), this protein is High frequency lysogenization protein HflD homolog.